Here is an 83-residue protein sequence, read N- to C-terminus: Small ribosomal subunit protein uS17 (83 aa).

It belongs to the universal ribosomal protein uS17 family. As to quaternary structure, part of the 30S ribosomal subunit.

In terms of biological role, one of the primary rRNA binding proteins, it binds specifically to the 5'-end of 16S ribosomal RNA. The sequence is that of Small ribosomal subunit protein uS17 from Colwellia psychrerythraea (strain 34H / ATCC BAA-681) (Vibrio psychroerythus).